A 609-amino-acid polypeptide reads, in one-letter code: Frizzled and smoothened-like protein E (609 aa).

Positions 1–20 (MEMIRIFLIYLILKIIIING) are cleaved as a signal peptide. Residues 21-259 (ENNEYSKGYG…QWKRVYDMAK (239 aa)) are Extracellular-facing. An FZ domain is found at 35–192 (FPGSKCLNYV…GLYKVPCIDP (158 aa)). Intrachain disulfides connect cysteine 40-cysteine 118, cysteine 53-cysteine 111, cysteine 100-cysteine 149, and cysteine 138-cysteine 189. N-linked (GlcNAc...) asparagine glycans are attached at residues asparagine 75, asparagine 130, asparagine 172, asparagine 198, asparagine 217, and asparagine 245. The helical transmembrane segment at 260–280 (TLSSISFICACYNILTFGILN) threads the bilayer. Over 281–288 (RKRKSKYN) the chain is Cytoplasmic. The helical transmembrane segment at 289–309 (ICITLMSTSIALVYLTDIIKF) threads the bilayer. Residues 310–337 (GYGIEEFLCPEPGRSAVQNDAACGITGA) are Extracellular-facing. A helical membrane pass occupies residues 338–358 (MFHFGITYCCCWAMTMSIVLF). Residues 359-365 (CSVKRIK) lie on the Cytoplasmic side of the membrane. A helical membrane pass occupies residues 366 to 386 (LFYFRHFMIGNTIFTIITTVI). Residues 387–408 (LLSAKKMVAGTGYIECWVRERW) lie on the Extracellular side of the membrane. The helical transmembrane segment at 409 to 429 (FVITLFWLPCGIGLSIGIFCI) threads the bilayer. Over 430–457 (GGVIHEIYNISKKVNIRESEFILRQIKP) the chain is Cytoplasmic. The helical transmembrane segment at 458–478 (FSLVFSVAGSFLYLFIFFFDV) threads the bilayer. Residues 479–511 (ERKIDSYKAAVADYVLCLLSGGSEETCFTTGPN) lie on the Extracellular side of the membrane. Residues 512-532 (YASFFIFYFFIRVFGVLFFSI) traverse the membrane as a helical segment. The Cytoplasmic portion of the chain corresponds to 533 to 609 (YGTSRVARDI…DSKSIELEKK (77 aa)). Residues 559-570 (ESGISRNNSRTD) are compositionally biased toward polar residues. The tract at residues 559-609 (ESGISRNNSRTDISFGKNNNSKNSNNSKNSNNSKNSNNSDNDSKSIELEKK) is disordered. Residues 575–598 (KNNNSKNSNNSKNSNNSKNSNNSD) are compositionally biased toward low complexity. The span at 599-609 (NDSKSIELEKK) shows a compositional bias: basic and acidic residues.

It belongs to the G-protein coupled receptor Fz/Smo family.

The protein resides in the membrane. This Dictyostelium discoideum (Social amoeba) protein is Frizzled and smoothened-like protein E (fslE).